Here is a 168-residue protein sequence, read N- to C-terminus: Vasopressin-neurophysin 2-copeptin (168 aa).

A signal peptide spans 1 to 23; sequence MLARMLNTTLSACFLSLLAFSSA. A disulfide bond links C24 and C29. G32 carries the glycine amide modification. 7 disulfides stabilise this stretch: C45-C89, C48-C62, C56-C79, C63-C69, C96-C108, C102-C120, and C109-C114. N135 carries N-linked (GlcNAc...) asparagine glycosylation.

Belongs to the vasopressin/oxytocin family. As to quaternary structure, interacts with vasopressin receptors V1bR/AVPR1B (Ki=85 pM), V1aR/AVPR1A (Ki=0.6 nM) and V2R/AVPR2 (Ki=4.9 nM). Interacts with oxytocin receptor (OXTR) (Ki=110 nM).

The protein resides in the secreted. In terms of biological role, neurophysin 2 specifically binds vasopressin. Functionally, vasopressin has a direct antidiuretic action on the kidney, it also causes vasoconstriction of the peripheral vessels. Acts by binding to vasopressin receptors (V1bR/AVPR1B, V1aR/AVPR1A, and V2R/AVPR2). This chain is Vasopressin-neurophysin 2-copeptin (Avp), found in Mus musculus (Mouse).